The primary structure comprises 226 residues: Membrane protein (226 aa).

At 1 to 11 the chain is on the virion surface side; the sequence is MSNGSIPVDEV. A helical membrane pass occupies residues 12–32; the sequence is IEHLRNWNFTWNIILTILLVV. The Intravirion portion of the chain corresponds to 33–41; the sequence is LQYGHYKYS. The chain crosses the membrane as a helical span at residues 42–62; it reads VFLYGVKMAILWILWPLVLAL. Topologically, residues 63-75 are virion surface; sequence SLFDAWASFQVNW. The helical transmembrane segment at 76-96 threads the bilayer; the sequence is VFFAFSILMACITLMLWIMYF. The Intravirion portion of the chain corresponds to 97–226; sequence VNSIRLWRRT…TDSEKVPHLV (130 aa). An interaction with N protein region spans residues 200 to 216; the sequence is RSKHGDYSAVSNPSAVL.

It belongs to the alphacoronaviruses M protein family. Homomultimer. Interacts with envelope E protein in the budding compartment of the host cell, which is located between endoplasmic reticulum and the Golgi complex. Forms a complex with HE and S proteins. Interacts with nucleocapsid N protein. This interaction probably participates in RNA packaging into the virus.

The protein resides in the virion membrane. Its subcellular location is the host Golgi apparatus membrane. Functionally, component of the viral envelope that plays a central role in virus morphogenesis and assembly via its interactions with other viral proteins. The sequence is that of Membrane protein from Sus scrofa (Pig).